We begin with the raw amino-acid sequence, 67 residues long: Alpha-toxin Bu1 (67 aa).

The LCN-type CS-alpha/beta domain maps to 3 to 65 (RDAYIADDKN…VPIRIPGRCR (63 aa)). 4 disulfides stabilise this stretch: C13–C64, C17–C37, C23–C47, and C27–C49. Position 65 is an arginine amide (R65).

The protein belongs to the long (4 C-C) scorpion toxin superfamily. Sodium channel inhibitor family. Alpha subfamily. In terms of tissue distribution, expressed by the venom gland.

The protein resides in the secreted. Alpha toxins bind voltage-independently at site-3 of sodium channels (Nav) and inhibit the inactivation of the activated channels, thereby blocking neuronal transmission. Since the experiments have been done on F11 cells (immortalized cell line derived from rat DRG neurons mainly expressing Nav1.3/SCN3A, but also Nav1.7/SCN9A and Nav1.2/SCN2A), it is supposed to act on these channels. The slow of inactivation process is partially reversible. Is lethal to mice. The polypeptide is Alpha-toxin Bu1 (Buthacus macrocentrus (Turkish scorpion)).